A 207-amino-acid chain; its full sequence is Ras-related protein Rab-7a (207 aa).

An N-acetylthreonine modification is found at Thr-2. 11 residues coordinate GTP: Ser-17, Gly-18, Val-19, Gly-20, Lys-21, Thr-22, Ser-23, Ser-34, Asn-35, Tyr-37, and Thr-40. Thr-22 is a Mg(2+) binding site. The Switch 1 signature appears at Tyr-28 to Ile-41. Thr-40 and Asp-63 together coordinate Mg(2+). Gly-66 provides a ligand contact to GTP. The Switch 2 motif lies at Gln-67–Asp-82. At Ser-72 the chain carries Phosphoserine. Residues Asn-125, Lys-126, Asp-128, Ala-156, and Lys-157 each contribute to the GTP site. Residues Lys-191 and Lys-194 each participate in a glycyl lysine isopeptide (Lys-Gly) (interchain with G-Cter in ubiquitin) cross-link. Residues Cys-205 and Cys-207 are each lipidated (S-geranylgeranyl cysteine). At Cys-207 the chain carries Cysteine methyl ester.

Belongs to the small GTPase superfamily. Rab family. In terms of assembly, interacts with NTRK1/TRKA. Interacts with RILP. Interacts with PSMA7. Interacts with RNF115. Interacts with and FYCO1. Interacts with the PIK3C3/VPS34-PIK3R4 complex. The GTP-bound form interacts with OSBPL1A. The GTP-bound form interacts with RAC1. Interacts with CLN3. Interacts with CHM, the substrate-binding subunit of the Rab geranylgeranyltransferase complex. Interacts with C9orf72. Does not interact with HPS4 and the BLOC-3 complex (heterodimer of HPS1 and HPS4). Interacts with CLN5. Interacts with PLEKHM1 (via N- and C-terminus). Interacts with PRPH; the interaction is direct. Interacts with VPS13A. The GDP-bound form interacts with RIMOC1. Interacts with the MON1A-CCZ1B complex and this interaction is enhanced in the presence of RIMOC1. Interacts with VPS39 and VPS41. Forms a ternary complex with LAMP2 and RUFY4; the interaction with LAMP2 is mediated by RUFY4 (via RUN and coiled coil domains). Mg(2+) is required as a cofactor. Deubiquitination at Lys-191 and Lys-194 by USP32. Post-translationally, phosphorylated at Ser-72 by LRRK1; phosphorylation is dependent on protein kinase C (PKC) activation of LRRK1. In terms of processing, prenylated. Prenylation is required for association with cellular membranes. As to expression, expressed in osteoclasts and in neurons.

The protein localises to the cytoplasmic vesicle. It is found in the phagosome membrane. The protein resides in the late endosome membrane. Its subcellular location is the lysosome membrane. It localises to the melanosome membrane. The protein localises to the autophagosome membrane. It is found in the lipid droplet. The protein resides in the endosome membrane. Its subcellular location is the mitochondrion membrane. It carries out the reaction GTP + H2O = GDP + phosphate + H(+). Its activity is regulated as follows. Regulated by guanine nucleotide exchange factors (GEFs) which promote the exchange of bound GDP for free GTP. Regulated by GTPase activating proteins (GAPs) which increase the GTP hydrolysis activity. Inhibited by GDP dissociation inhibitors (GDIs). In terms of biological role, the small GTPases Rab are key regulators of intracellular membrane trafficking, from the formation of transport vesicles to their fusion with membranes. Rabs cycle between an inactive GDP-bound form and an active GTP-bound form that is able to recruit to membranes different sets of downstream effectors directly responsible for vesicle formation, movement, tethering and fusion. In its active state, RAB7A binds to a variety of effector proteins playing a key role in the regulation of endo-lysosomal trafficking. Governs early-to-late endosomal maturation, microtubule minus-end as well as plus-end directed endosomal migration and positioning, and endosome-lysosome transport through different protein-protein interaction cascades. Also plays a central role in growth-factor-mediated cell signaling, nutrient-transporter-mediated nutrient uptake, neurotrophin transport in the axons of neurons and lipid metabolism. Also involved in regulation of some specialized endosomal membrane trafficking, such as maturation of melanosomes, pathogen-induced phagosomes (or vacuoles) and autophagosomes. Plays a role in the maturation and acidification of phagosomes that engulf pathogens, such as S.aureus and Mycobacteria. Plays a role in the fusion of phagosomes with lysosomes. In concert with RAC1, plays a role in regulating the formation of RBs (ruffled borders) in osteoclasts. Controls the endosomal trafficking and neurite outgrowth signaling of NTRK1/TRKA. Regulates the endocytic trafficking of the EGF-EGFR complex by regulating its lysosomal degradation. Involved in the ADRB2-stimulated lipolysis through lipophagy, a cytosolic lipase-independent autophagic pathway. Required for the exosomal release of SDCBP, CD63 and syndecan. Required for vesicular trafficking and cell surface expression of ACE2. May play a role in PRPH neuronal intermediate filament assembly. The protein is Ras-related protein Rab-7a of Rattus norvegicus (Rat).